The primary structure comprises 395 residues: Beta-1,4-galactosyltransferase 3 (395 aa).

Residues 1–10 (MLRRLLERPC) are Cytoplasmic-facing. The helical; Signal-anchor for type II membrane protein transmembrane segment at 11 to 31 (TLALLVGSQLAVMMYLSLGGF) threads the bilayer. At 32-395 (RSLSALFGRD…ANHTAPRGSH (364 aa)) the chain is on the lumenal side. A glycan (N-linked (GlcNAc...) asparagine) is linked at asparagine 57. Cysteine 79 and cysteine 121 are disulfide-bonded. 132–136 (PHRAR) is a UDP-alpha-D-galactose binding site. Asparagine 168 carries N-linked (GlcNAc...) asparagine glycosylation. Residues 171 to 173 (FNR), 198 to 199 (VD), tyrosine 228, and tryptophan 260 contribute to the UDP-alpha-D-galactose site. An intrachain disulfide couples cysteine 192 to cysteine 211. A Mn(2+)-binding site is contributed by aspartate 199. N-acetyl-D-glucosamine is bound at residue 262 to 265 (GEDD). Histidine 293 is a binding site for Mn(2+). Residue 293 to 295 (HRG) coordinates UDP-alpha-D-galactose. Arginine 305 contributes to the N-acetyl-D-glucosamine binding site. The N-linked (GlcNAc...) asparagine glycan is linked to asparagine 339. The segment at 340–395 (ITADIGTDPRGPRSPSGPRYPPGSSQAFRQEMLQRRPPARPGPLPTANHTAPRGSH) is disordered. Residues 352 to 364 (RSPSGPRYPPGSS) show a composition bias toward low complexity. Asparagine 387 carries N-linked (GlcNAc...) asparagine glycosylation.

Belongs to the glycosyltransferase 7 family. Mn(2+) is required as a cofactor.

Its subcellular location is the golgi apparatus. It localises to the golgi stack membrane. The enzyme catalyses an N-acetyl-beta-D-glucosaminyl derivative + UDP-alpha-D-galactose = a beta-D-galactosyl-(1-&gt;4)-N-acetyl-beta-D-glucosaminyl derivative + UDP + H(+). It catalyses the reaction N-acetyl-D-glucosamine + UDP-alpha-D-galactose = beta-D-galactosyl-(1-&gt;4)-N-acetyl-D-glucosamine + UDP + H(+). It carries out the reaction a beta-D-GlcNAc-(1-&gt;3)-beta-D-Gal-(1-&gt;4)-beta-D-Glc-(1&lt;-&gt;1)-Cer(d18:1(4E)) + UDP-alpha-D-galactose = a neolactoside nLc4Cer(d18:1(4E)) + UDP + H(+). The catalysed reaction is a beta-D-glucosylceramide + UDP-alpha-D-galactose = a beta-D-galactosyl-(1-&gt;4)-beta-D-glucosyl-(1&lt;-&gt;1)-ceramide + UDP + H(+). The enzyme catalyses a neolactoside IV(3)-beta-GlcNAc-nLc4Cer + UDP-alpha-D-galactose = a neolactoside nLc6Cer + UDP + H(+). Its pathway is protein modification; protein glycosylation. Responsible for the synthesis of complex-type N-linked oligosaccharides in many glycoproteins as well as the carbohydrate moieties of glycolipids. The polypeptide is Beta-1,4-galactosyltransferase 3 (Mus musculus (Mouse)).